A 185-amino-acid chain; its full sequence is uncharacterized protein (185 aa).

The next 4 membrane-spanning stretches (helical) occupy residues 5–25, 63–83, 97–117, and 149–169; these read SFLISTLFDLYIMVVILRIWL, LATVLFAYVLCVLKFVVLILI, FLGLLSLIKAAGGLLFWVLLI, and IIPAIGGLDLSVLVLFIGLQF.

Belongs to the YggT family.

The protein localises to the cell membrane. This is an uncharacterized protein from Vibrio alginolyticus.